Consider the following 415-residue polypeptide: Gamma-glutamyl phosphate reductase (415 aa).

This sequence belongs to the gamma-glutamyl phosphate reductase family.

The protein resides in the cytoplasm. It catalyses the reaction L-glutamate 5-semialdehyde + phosphate + NADP(+) = L-glutamyl 5-phosphate + NADPH + H(+). It functions in the pathway amino-acid biosynthesis; L-proline biosynthesis; L-glutamate 5-semialdehyde from L-glutamate: step 2/2. Catalyzes the NADPH-dependent reduction of L-glutamate 5-phosphate into L-glutamate 5-semialdehyde and phosphate. The product spontaneously undergoes cyclization to form 1-pyrroline-5-carboxylate. The sequence is that of Gamma-glutamyl phosphate reductase from Dictyoglomus turgidum (strain DSM 6724 / Z-1310).